The primary structure comprises 490 residues: Probable G-protein coupled receptor npr-8 (490 aa).

Topologically, residues 1–55 (MEVKDIDNYCDRGISPNASNYLTYPFDGLCLQKFFYQLQTSLRRFTPYEEIIYTT) are extracellular. Residue Asn17 is glycosylated (N-linked (GlcNAc...) asparagine). A helical membrane pass occupies residues 56–76 (VYIIISVAAVIGNGLVIMAVV). The Cytoplasmic portion of the chain corresponds to 77–86 (RKKTMRTNRN). The helical transmembrane segment at 87 to 107 (VLILNLALSNLILAITNIPFL) threads the bilayer. Residues 108 to 125 (WLPSIDFEFPYSRFFCKF) lie on the Extracellular side of the membrane. The helical transmembrane segment at 126–146 (ANVLPGSNIYCSTLTISVMAI) threads the bilayer. Residues 147 to 166 (DRYYSVKKLKIASNRKQCFH) are Cytoplasmic-facing. Residues 167–187 (AVLVSLAIWIVSFILSLPLLL) traverse the membrane as a helical segment. Over 188-236 (YYETSMLYVMREIRVVDQSGQEVIRSYGWRQCRLVSAGRLPDITQSIQL) the chain is Extracellular. The helical transmembrane segment at 237 to 257 (LMSILQVAFLYIVPLFVLSIF) threads the bilayer. Topologically, residues 258-331 (NVKLTRFLKT…QRTNRTTSLL (74 aa)) are cytoplasmic. The interval 272 to 322 (MSKTRAPPKRFDRSDSHHNSLKNNNNHTSSLRSPSMPSIRSSITERNKTNQ) is disordered. Positions 280 to 289 (KRFDRSDSHH) are enriched in basic and acidic residues. Residues 292–313 (LKNNNNHTSSLRSPSMPSIRSS) show a composition bias toward low complexity. A helical membrane pass occupies residues 332-352 (IAMAGSYAALWFPFTLITFLI). Residues 353–374 (DFELIINQDYVNLVERIDQTCK) are Extracellular-facing. Residues 375-395 (MVSMLSICVNPFLYGFLNTNF) form a helical membrane-spanning segment. Over 396–490 (RHEFSDIYYR…DDDIEKDSFV (95 aa)) the chain is Cytoplasmic.

This sequence belongs to the G-protein coupled receptor 1 family.

The protein localises to the cell membrane. Not known. Putative receptor. This Caenorhabditis elegans protein is Probable G-protein coupled receptor npr-8.